The primary structure comprises 475 residues: Trigger factor (475 aa).

The region spanning 165-250 (GDRVTIDYLG…VKAVFRPDEL (86 aa)) is the PPIase FKBP-type domain. The span at 439–466 (EYDETDVPEEKPAKKKSAVKEKSAEKTS) shows a compositional bias: basic and acidic residues. The segment at 439 to 475 (EYDETDVPEEKPAKKKSAVKEKSAEKTSAKKKAPKKA) is disordered.

Belongs to the FKBP-type PPIase family. Tig subfamily.

It is found in the cytoplasm. It carries out the reaction [protein]-peptidylproline (omega=180) = [protein]-peptidylproline (omega=0). Involved in protein export. Acts as a chaperone by maintaining the newly synthesized protein in an open conformation. Functions as a peptidyl-prolyl cis-trans isomerase. This chain is Trigger factor, found in Bartonella tribocorum (strain CIP 105476 / IBS 506).